The sequence spans 141 residues: Protein X (141 aa).

The span at 24–48 (QSSGPSFPRPAAGSAASSASSPSPS) shows a compositional bias: low complexity. The tract at residues 24–52 (QSSGPSFPRPAAGSAASSASSPSPSDESD) is disordered. Residues 68-113 (PCCLVFTCAELRTMDSTVNFVSWHANRQLGMPSKDLWTPYIKDQLL) form a mitochondrial targeting sequence region.

It belongs to the orthohepadnavirus protein X family. As to quaternary structure, may form homodimer. May interact with host CEBPA, CFLAR, CREB1, DDB1, E4F1, HBXIP, HSPD1/HSP60, NFKBIA, POLR2E and SMAD4. Interacts with host SMC5-SMC6 complex and induces its degradation. Interacts with host TRPC4AP; leading to prevent ubiquitination of TRPC4AP. Interacts with host PLSCR1; this interaction promotes ubiquitination and degradation of HBx and impairs HBx-mediated cell proliferation. Post-translationally, a fraction may be phosphorylated in insect cells and HepG2 cells, a human hepatoblastoma cell line. Phosphorylated in vitro by host protein kinase C or mitogen-activated protein kinase. N-acetylated in insect cells.

It is found in the host cytoplasm. Its subcellular location is the host nucleus. It localises to the host mitochondrion. Functionally, multifunctional protein that plays a role in silencing host antiviral defenses and promoting viral transcription. Does not seem to be essential for HBV infection. May be directly involved in development of cirrhosis and liver cancer (hepatocellular carcinoma). Most of cytosolic activities involve modulation of cytosolic calcium. The effect on apoptosis is controversial depending on the cell types in which the studies have been conducted. May induce apoptosis by localizing in mitochondria and causing loss of mitochondrial membrane potential. May also modulate apoptosis by binding host CFLAR, a key regulator of the death-inducing signaling complex (DISC). Promotes viral transcription by using the host E3 ubiquitin ligase DDB1 to target the SMC5-SMC6 complex to proteasomal degradation. This host complex would otherwise bind to viral episomal DNA, and prevents its transcription. Moderately stimulates transcription of many different viral and cellular transcription elements. Promoters and enhancers stimulated by HBx contain DNA binding sites for NF-kappa-B, AP-1, AP-2, c-EBP, ATF/CREB, or the calcium-activated factor NF-AT. This Woodchuck hepatitis B virus (isolate 7) (WHV) protein is Protein X.